A 255-amino-acid chain; its full sequence is Protein DAL82 (255 aa).

A disordered region spans residues 87–149 (PEHPRPRTKF…SQPLPLDSIT (63 aa)). Residues 128–138 (PNNHSSDDEHS) are compositionally biased toward basic and acidic residues.

Functionally, positive regulator of allophanate-induced genes in S.cerevisiae. The polypeptide is Protein DAL82 (DAL82) (Saccharomyces cerevisiae (strain ATCC 204508 / S288c) (Baker's yeast)).